Reading from the N-terminus, the 182-residue chain is uncharacterized protein (182 aa).

Belongs to the staphylococcal tandem lipoprotein family.

This is an uncharacterized protein from Staphylococcus haemolyticus (strain JCSC1435).